The chain runs to 255 residues: tRNA (guanine-N(1)-)-methyltransferase (255 aa).

S-adenosyl-L-methionine-binding positions include G113 and 133 to 138; that span reads VGDFVL.

This sequence belongs to the RNA methyltransferase TrmD family. In terms of assembly, homodimer.

It localises to the cytoplasm. It carries out the reaction guanosine(37) in tRNA + S-adenosyl-L-methionine = N(1)-methylguanosine(37) in tRNA + S-adenosyl-L-homocysteine + H(+). Its function is as follows. Specifically methylates guanosine-37 in various tRNAs. The polypeptide is tRNA (guanine-N(1)-)-methyltransferase (Francisella philomiragia subsp. philomiragia (strain ATCC 25017 / CCUG 19701 / FSC 153 / O#319-036)).